The primary structure comprises 187 residues: Adenine phosphoribosyltransferase (187 aa).

The protein belongs to the purine/pyrimidine phosphoribosyltransferase family. In terms of assembly, homodimer.

It is found in the cytoplasm. It catalyses the reaction AMP + diphosphate = 5-phospho-alpha-D-ribose 1-diphosphate + adenine. It participates in purine metabolism; AMP biosynthesis via salvage pathway; AMP from adenine: step 1/1. Catalyzes a salvage reaction resulting in the formation of AMP, that is energically less costly than de novo synthesis. The polypeptide is Adenine phosphoribosyltransferase (Yersinia pestis (strain Pestoides F)).